The sequence spans 254 residues: HLA class II histocompatibility antigen, DQ alpha 1 chain (254 aa).

An N-terminal signal peptide occupies residues 1–23 (MILNKALMLGALALTTVMSPCGG). The tract at residues 24–119 (EDIVADHVAS…EVPEVTVFSK (96 aa)) is alpha-1. At 24-216 (EDIVADHVAS…IPAPMSELTE (193 aa)) the chain is on the extracellular side. Asn103 and Asn143 each carry an N-linked (GlcNAc...) asparagine glycan. The Ig-like C1-type domain occupies 112 to 204 (PEVTVFSKSP…LDKPLLKHWE (93 aa)). The tract at residues 120–203 (SPVTLGQPNI…GLDKPLLKHW (84 aa)) is alpha-2. Cys132 and Cys188 are joined by a disulfide. Residues 204 to 216 (EPEIPAPMSELTE) are connecting peptide. The helical transmembrane segment at 217 to 239 (TVVCALGLSVGLVGIVVGTVFII) threads the bilayer. Residues 240–254 (RGLRSVGASRHQGPL) lie on the Cytoplasmic side of the membrane.

The protein belongs to the MHC class II family. In terms of assembly, heterodimer of an alpha and a beta subunit; also referred as MHC class II molecule. In the endoplasmic reticulum (ER) it forms a heterononamer; 3 MHC class II molecules bind to a CD74 homotrimer (also known as invariant chain or HLA class II histocompatibility antigen gamma chain). In the endosomal/lysosomal system; CD74 undergoes sequential degradation by various proteases; leaving a small fragment termed CLIP on each MHC class II molecule. MHC class II molecule interacts with HLA_DM, and HLA_DO in B-cells, in order to release CLIP and facilitate the binding of antigenic peptides.

The protein localises to the cell membrane. The protein resides in the endoplasmic reticulum membrane. It localises to the golgi apparatus. It is found in the trans-Golgi network membrane. Its subcellular location is the endosome membrane. The protein localises to the lysosome membrane. Its function is as follows. Binds peptides derived from antigens that access the endocytic route of antigen presenting cells (APC) and presents them on the cell surface for recognition by the CD4 T-cells. The peptide binding cleft accommodates peptides of 10-30 residues. The peptides presented by MHC class II molecules are generated mostly by degradation of proteins that access the endocytic route, where they are processed by lysosomal proteases and other hydrolases. Exogenous antigens that have been endocytosed by the APC are thus readily available for presentation via MHC II molecules, and for this reason this antigen presentation pathway is usually referred to as exogenous. As membrane proteins on their way to degradation in lysosomes as part of their normal turn-over are also contained in the endosomal/lysosomal compartments, exogenous antigens must compete with those derived from endogenous components. Autophagy is also a source of endogenous peptides, autophagosomes constitutively fuse with MHC class II loading compartments. In addition to APCs, other cells of the gastrointestinal tract, such as epithelial cells, express MHC class II molecules and CD74 and act as APCs, which is an unusual trait of the GI tract. To produce a MHC class II molecule that presents an antigen, three MHC class II molecules (heterodimers of an alpha and a beta chain) associate with a CD74 trimer in the ER to form a heterononamer. Soon after the entry of this complex into the endosomal/lysosomal system where antigen processing occurs, CD74 undergoes a sequential degradation by various proteases, including CTSS and CTSL, leaving a small fragment termed CLIP (class-II-associated invariant chain peptide). The removal of CLIP is facilitated by HLA-DM via direct binding to the alpha-beta-CLIP complex so that CLIP is released. HLA-DM stabilizes MHC class II molecules until primary high affinity antigenic peptides are bound. The MHC II molecule bound to a peptide is then transported to the cell membrane surface. In B-cells, the interaction between HLA-DM and MHC class II molecules is regulated by HLA-DO. Primary dendritic cells (DCs) also to express HLA-DO. Lysosomal microenvironment has been implicated in the regulation of antigen loading into MHC II molecules, increased acidification produces increased proteolysis and efficient peptide loading. The sequence is that of HLA class II histocompatibility antigen, DQ alpha 1 chain (HLA-DQA1) from Homo sapiens (Human).